Reading from the N-terminus, the 322-residue chain is ATP-dependent 6-phosphofructokinase (322 aa).

Gly11 contacts ATP. 21–25 (RAVTR) is an ADP binding site. Residues 72-73 (RC) and 102-105 (GDGS) each bind ATP. Asp103 is a binding site for Mg(2+). 127 to 129 (TID) serves as a coordination point for substrate. Asp129 acts as the Proton acceptor in catalysis. Position 156 (Arg156) interacts with ADP. Substrate contacts are provided by residues Arg164 and 171-173 (MGR). ADP-binding positions include 187-189 (GAE), Arg213, and 215-217 (KKH). Substrate is bound by residues Glu224, Arg245, and 251–254 (HIQR).

The protein belongs to the phosphofructokinase type A (PFKA) family. ATP-dependent PFK group I subfamily. Prokaryotic clade 'B1' sub-subfamily. Homotetramer. Mg(2+) is required as a cofactor.

It is found in the cytoplasm. The enzyme catalyses beta-D-fructose 6-phosphate + ATP = beta-D-fructose 1,6-bisphosphate + ADP + H(+). It functions in the pathway carbohydrate degradation; glycolysis; D-glyceraldehyde 3-phosphate and glycerone phosphate from D-glucose: step 3/4. With respect to regulation, allosterically activated by ADP and other diphosphonucleosides, and allosterically inhibited by phosphoenolpyruvate. In terms of biological role, catalyzes the phosphorylation of D-fructose 6-phosphate to fructose 1,6-bisphosphate by ATP, the first committing step of glycolysis. In Staphylococcus epidermidis (strain ATCC 35984 / DSM 28319 / BCRC 17069 / CCUG 31568 / BM 3577 / RP62A), this protein is ATP-dependent 6-phosphofructokinase.